The sequence spans 466 residues: Cysteine--tRNA ligase (466 aa).

Cysteine 27 is a Zn(2+) binding site. The 'HIGH' region motif lies at 29-39 (PTVYNYFHIGN). Cysteine 207, histidine 232, and glutamate 236 together coordinate Zn(2+). The short motif at 264–268 (KMSKS) is the 'KMSKS' region element. Residue lysine 267 coordinates ATP.

This sequence belongs to the class-I aminoacyl-tRNA synthetase family. As to quaternary structure, monomer. Requires Zn(2+) as cofactor.

It localises to the cytoplasm. The catalysed reaction is tRNA(Cys) + L-cysteine + ATP = L-cysteinyl-tRNA(Cys) + AMP + diphosphate. This Clostridium novyi (strain NT) protein is Cysteine--tRNA ligase.